We begin with the raw amino-acid sequence, 215 residues long: FGFR1 oncogene partner 2 homolog (215 aa).

Residues 35–183 (LLNKRVEAMK…SGLRELLGIS (149 aa)) adopt a coiled-coil conformation.

The protein belongs to the SIKE family.

Its subcellular location is the cytoplasm. This chain is FGFR1 oncogene partner 2 homolog (fgfr1op2), found in Danio rerio (Zebrafish).